Here is a 559-residue protein sequence, read N- to C-terminus: U-box domain-containing protein 41 (559 aa).

Disordered stretches follow at residues 1 to 30 and 121 to 156; these read MGGN…KHDE and RMDK…SPSD. Over residues 12-24 the composition is skewed to polar residues; it reads HQRSSSATTTTLP. The U-box domain maps to 30 to 104; sequence ETPPEFLCPI…FSWCDRQKVD (75 aa). ARM repeat units lie at residues 266 to 305, 307 to 346, 348 to 388, 390 to 427, and 428 to 472; these read EDLR…NLSL, KQNK…SLAL, DENK…HLSL, PSNR…NLAA, and CPDG…TLCQ.

It carries out the reaction S-ubiquitinyl-[E2 ubiquitin-conjugating enzyme]-L-cysteine + [acceptor protein]-L-lysine = [E2 ubiquitin-conjugating enzyme]-L-cysteine + N(6)-ubiquitinyl-[acceptor protein]-L-lysine.. Its pathway is protein modification; protein ubiquitination. Functions as an E3 ubiquitin ligase. The protein is U-box domain-containing protein 41 (PUB41) of Arabidopsis thaliana (Mouse-ear cress).